The sequence spans 286 residues: Protein MGF 360-3L (286 aa).

The chain crosses the membrane as a helical span at residues 1–17 (MKVLLELLLGYSVLILA). N61 carries an N-linked (GlcNAc...) asparagine; by host glycan. A run of 2 helical transmembrane segments spans residues 128–148 (HCCF…FVYN) and 153–173 (LNTT…SQPA). N-linked (GlcNAc...) asparagine; by host glycans are attached at residues N238 and N263.

It belongs to the asfivirus MGF 110 family.

The protein localises to the host membrane. In terms of biological role, plays a role in virus cell tropism, and may be required for efficient virus replication in macrophages. In African swine fever virus (isolate Tick/Malawi/Lil 20-1/1983) (ASFV), this protein is Protein MGF 360-3L.